A 688-amino-acid polypeptide reads, in one-letter code: Potassium-transporting ATPase ATP-binding subunit (688 aa).

Helical transmembrane passes span 37-57, 65-85, 219-239, and 262-282; these read FIVYIASILTTVLYVFSLFGI, ILFISILLWFTVLFANFAEAI, IALQILLVSLTIIFLVVTASL, and LALLVCLAPTTIGALLSAIGI. Asp313 functions as the 4-aspartylphosphate intermediate in the catalytic mechanism. ATP-binding positions include Asp350, Glu354, 383–390, and Lys401; that span reads FTAKTRMS. Mg(2+)-binding residues include Asp524 and Asp528. 3 consecutive transmembrane segments (helical) span residues 586–606, 622–642, and 668–688; these read IANDIAKYFAIIPPLFIGLFP, AILSAVIYNAFIIIFLIPLAL, and IIAPFIAIKGIDILITMLGIV.

The protein belongs to the cation transport ATPase (P-type) (TC 3.A.3) family. Type IA subfamily. The system is composed of three essential subunits: KdpA, KdpB and KdpC.

It is found in the cell membrane. The enzyme catalyses K(+)(out) + ATP + H2O = K(+)(in) + ADP + phosphate + H(+). Part of the high-affinity ATP-driven potassium transport (or Kdp) system, which catalyzes the hydrolysis of ATP coupled with the electrogenic transport of potassium into the cytoplasm. This subunit is responsible for energy coupling to the transport system and for the release of the potassium ions to the cytoplasm. In Clostridium perfringens (strain ATCC 13124 / DSM 756 / JCM 1290 / NCIMB 6125 / NCTC 8237 / Type A), this protein is Potassium-transporting ATPase ATP-binding subunit.